A 186-amino-acid chain; its full sequence is Negative modulator of initiation of replication (186 aa).

Residues 93–94 (AV) form an interaction with DNA region.

This sequence belongs to the SeqA family. As to quaternary structure, homodimer. Polymerizes to form helical filaments.

Its subcellular location is the cytoplasm. Its function is as follows. Negative regulator of replication initiation, which contributes to regulation of DNA replication and ensures that replication initiation occurs exactly once per chromosome per cell cycle. Binds to pairs of hemimethylated GATC sequences in the oriC region, thus preventing assembly of replication proteins and re-initiation at newly replicated origins. Repression is relieved when the region becomes fully methylated. This chain is Negative modulator of initiation of replication, found in Shewanella halifaxensis (strain HAW-EB4).